The sequence spans 404 residues: S-adenosylmethionine synthase (404 aa).

H18 provides a ligand contact to ATP. D20 provides a ligand contact to Mg(2+). E46 contacts K(+). L-methionine is bound by residues E59 and Q102. The interval 102–112 (QSPDIAQGVDT) is flexible loop. ATP-binding positions include 177 to 179 (DGK), 249 to 250 (KF), D258, 264 to 265 (RK), A281, and K285. An L-methionine-binding site is contributed by D258. K289 provides a ligand contact to L-methionine.

It belongs to the AdoMet synthase family. Homotetramer; dimer of dimers. Mg(2+) serves as cofactor. It depends on K(+) as a cofactor.

The protein resides in the cytoplasm. It catalyses the reaction L-methionine + ATP + H2O = S-adenosyl-L-methionine + phosphate + diphosphate. It functions in the pathway amino-acid biosynthesis; S-adenosyl-L-methionine biosynthesis; S-adenosyl-L-methionine from L-methionine: step 1/1. Functionally, catalyzes the formation of S-adenosylmethionine (AdoMet) from methionine and ATP. The overall synthetic reaction is composed of two sequential steps, AdoMet formation and the subsequent tripolyphosphate hydrolysis which occurs prior to release of AdoMet from the enzyme. This Nocardia farcinica (strain IFM 10152) protein is S-adenosylmethionine synthase.